The primary structure comprises 280 residues: uncharacterized protein (280 aa).

3 to 29 (KKIAIVTGASSGFGLLAAVKLARSFFV) provides a ligand contact to NADP(+). Substrate is bound at residue serine 139. The active-site Proton acceptor is the tyrosine 152.

It belongs to the short-chain dehydrogenases/reductases (SDR) family.

This is an uncharacterized protein from Bacillus subtilis (strain 168).